A 144-amino-acid chain; its full sequence is uncharacterized protein (144 aa).

Residues 23–82 (EELYKKLENNLRKIETSYLDSKHCQDFKRKIEYYKIVPLISETKEIIKVLIQKIETLEIK) adopt a coiled-coil conformation.

This is an uncharacterized protein from Acanthamoeba polyphaga mimivirus (APMV).